Here is a 340-residue protein sequence, read N- to C-terminus: Hydroxyurea phosphotransferase (340 aa).

The active-site Proton acceptor is the aspartate 240.

This sequence belongs to the aminoglycoside phosphotransferase family.

In terms of biological role, potential phosphotransferase that inactivates hydroxyurea by phosphorylation of the hydroxy group in the hydroxylamine moiety. This chain is Hydroxyurea phosphotransferase (hur), found in Kitasatospora aureofaciens (Streptomyces aureofaciens).